The following is a 419-amino-acid chain: Putative L-glutamine:3-amino-2,3-dideoxy-scyllo-inosose aminotransferase (419 aa).

The residue at position 199 (Lys-199) is an N6-(pyridoxal phosphate)lysine.

This sequence belongs to the DegT/DnrJ/EryC1 family. L-glutamine:2-deoxy-scyllo-inosose/scyllo-inosose aminotransferase subfamily. Pyridoxal 5'-phosphate serves as cofactor.

The enzyme catalyses 3-amino-2,3-dideoxy-scyllo-inosose + L-glutamine = 2-deoxystreptamine + 2-oxoglutaramate. Its pathway is metabolic intermediate biosynthesis; 2-deoxystreptamine biosynthesis; 2-deoxystreptamine from D-glucose 6-phosphate: step 4/4. The protein operates within antibiotic biosynthesis; kanamycin biosynthesis. Catalyzes the transamination of 3-amino-2,3-dideoxy-scyllo-inosose (amino-DOI) into 2-deoxystreptamine (DOS). The protein is Putative L-glutamine:3-amino-2,3-dideoxy-scyllo-inosose aminotransferase (kanD) of Streptomyces kanamyceticus.